The chain runs to 87 residues: Small ribosomal subunit protein uS15 (87 aa).

It belongs to the universal ribosomal protein uS15 family. Part of the 30S ribosomal subunit. Forms a bridge to the 50S subunit in the 70S ribosome, contacting the 23S rRNA.

Its function is as follows. One of the primary rRNA binding proteins, it binds directly to 16S rRNA where it helps nucleate assembly of the platform of the 30S subunit by binding and bridging several RNA helices of the 16S rRNA. Functionally, forms an intersubunit bridge (bridge B4) with the 23S rRNA of the 50S subunit in the ribosome. The chain is Small ribosomal subunit protein uS15 from Pseudothermotoga lettingae (strain ATCC BAA-301 / DSM 14385 / NBRC 107922 / TMO) (Thermotoga lettingae).